The sequence spans 359 residues: DNA polymerase IV (359 aa).

The UmuC domain maps to 4 to 184 (IVHVDMDAFY…LKVNRIPGVG (181 aa)). Mg(2+)-binding residues include Asp-8 and Asp-102. Glu-103 is an active-site residue.

This sequence belongs to the DNA polymerase type-Y family. Monomer. Mg(2+) serves as cofactor.

It is found in the cytoplasm. It catalyses the reaction DNA(n) + a 2'-deoxyribonucleoside 5'-triphosphate = DNA(n+1) + diphosphate. Poorly processive, error-prone DNA polymerase involved in untargeted mutagenesis. Copies undamaged DNA at stalled replication forks, which arise in vivo from mismatched or misaligned primer ends. These misaligned primers can be extended by PolIV. Exhibits no 3'-5' exonuclease (proofreading) activity. May be involved in translesional synthesis, in conjunction with the beta clamp from PolIII. The sequence is that of DNA polymerase IV from Xanthomonas oryzae pv. oryzae (strain MAFF 311018).